The primary structure comprises 150 residues: Transcription antitermination protein NusB (150 aa).

The protein belongs to the NusB family.

In terms of biological role, involved in transcription antitermination. Required for transcription of ribosomal RNA (rRNA) genes. Binds specifically to the boxA antiterminator sequence of the ribosomal RNA (rrn) operons. The chain is Transcription antitermination protein NusB from Streptococcus pyogenes serotype M2 (strain MGAS10270).